A 255-amino-acid chain; its full sequence is Imidazole glycerol phosphate synthase subunit HisF (255 aa).

Catalysis depends on residues Asp-11 and Asp-130.

The protein belongs to the HisA/HisF family. In terms of assembly, heterodimer of HisH and HisF.

It localises to the cytoplasm. The enzyme catalyses 5-[(5-phospho-1-deoxy-D-ribulos-1-ylimino)methylamino]-1-(5-phospho-beta-D-ribosyl)imidazole-4-carboxamide + L-glutamine = D-erythro-1-(imidazol-4-yl)glycerol 3-phosphate + 5-amino-1-(5-phospho-beta-D-ribosyl)imidazole-4-carboxamide + L-glutamate + H(+). It participates in amino-acid biosynthesis; L-histidine biosynthesis; L-histidine from 5-phospho-alpha-D-ribose 1-diphosphate: step 5/9. In terms of biological role, IGPS catalyzes the conversion of PRFAR and glutamine to IGP, AICAR and glutamate. The HisF subunit catalyzes the cyclization activity that produces IGP and AICAR from PRFAR using the ammonia provided by the HisH subunit. This chain is Imidazole glycerol phosphate synthase subunit HisF, found in Prochlorococcus marinus subsp. pastoris (strain CCMP1986 / NIES-2087 / MED4).